A 227-amino-acid chain; its full sequence is MLVCIPEVLSKDEVAEFRRIMDAAEWEDGRATAGAQSALVKRNEQLPPDGEVARQLGARVVRALLANPHFVSAAIPLQIFPPLFNRYGEGHHFGMHVDNAVRGDPLTGLRIRTDLSVTLFLAEPDEYDGGELVAEDYYGTQEVKLPAGDLVLYPSSSLHRVTPVTRGTRVASFFWLQSMVRSPQARSLIYDLDGAIQGLAAELGQDHAEVVRLAGIYHNLIRTWAEV.

Positions 78 to 178 constitute a Fe2OG dioxygenase domain; sequence QIFPPLFNRY…RVASFFWLQS (101 aa). The Fe cation site is built by histidine 96, aspartate 98, and histidine 159. Arginine 169 is a binding site for 2-oxoglutarate.

Fe(2+) serves as cofactor. L-ascorbate is required as a cofactor.

The chain is PKHD-type hydroxylase M446_1130 from Methylobacterium sp. (strain 4-46).